The primary structure comprises 160 residues: SsrA-binding protein (160 aa).

Residues 131–160 (KKEYDKRHTERERDSDRELQRAVRTKGKED) form a disordered region.

Belongs to the SmpB family.

The protein resides in the cytoplasm. Its function is as follows. Required for rescue of stalled ribosomes mediated by trans-translation. Binds to transfer-messenger RNA (tmRNA), required for stable association of tmRNA with ribosomes. tmRNA and SmpB together mimic tRNA shape, replacing the anticodon stem-loop with SmpB. tmRNA is encoded by the ssrA gene; the 2 termini fold to resemble tRNA(Ala) and it encodes a 'tag peptide', a short internal open reading frame. During trans-translation Ala-aminoacylated tmRNA acts like a tRNA, entering the A-site of stalled ribosomes, displacing the stalled mRNA. The ribosome then switches to translate the ORF on the tmRNA; the nascent peptide is terminated with the 'tag peptide' encoded by the tmRNA and targeted for degradation. The ribosome is freed to recommence translation, which seems to be the essential function of trans-translation. This chain is SsrA-binding protein, found in Pseudomonas fluorescens (strain ATCC BAA-477 / NRRL B-23932 / Pf-5).